The sequence spans 220 residues: UPF0643 protein PB2B2.08 (220 aa).

The protein belongs to the UPF0643 family.

Its subcellular location is the cytoplasm. It localises to the nucleus. This is UPF0643 protein PB2B2.08 from Schizosaccharomyces pombe (strain 972 / ATCC 24843) (Fission yeast).